Reading from the N-terminus, the 255-residue chain is Thiazole synthase (255 aa).

Catalysis depends on Lys96, which acts as the Schiff-base intermediate with DXP. 1-deoxy-D-xylulose 5-phosphate-binding positions include Gly157, 183 to 184 (AG), and 205 to 206 (NT).

It belongs to the ThiG family. In terms of assembly, homotetramer. Forms heterodimers with either ThiH or ThiS.

It localises to the cytoplasm. It carries out the reaction [ThiS sulfur-carrier protein]-C-terminal-Gly-aminoethanethioate + 2-iminoacetate + 1-deoxy-D-xylulose 5-phosphate = [ThiS sulfur-carrier protein]-C-terminal Gly-Gly + 2-[(2R,5Z)-2-carboxy-4-methylthiazol-5(2H)-ylidene]ethyl phosphate + 2 H2O + H(+). Its pathway is cofactor biosynthesis; thiamine diphosphate biosynthesis. Its function is as follows. Catalyzes the rearrangement of 1-deoxy-D-xylulose 5-phosphate (DXP) to produce the thiazole phosphate moiety of thiamine. Sulfur is provided by the thiocarboxylate moiety of the carrier protein ThiS. In vitro, sulfur can be provided by H(2)S. This chain is Thiazole synthase, found in Staphylococcus saprophyticus subsp. saprophyticus (strain ATCC 15305 / DSM 20229 / NCIMB 8711 / NCTC 7292 / S-41).